The sequence spans 596 residues: UDP-glucuronate:xylan alpha-glucuronosyltransferase 2 (596 aa).

Residues 17–37 form a helical; Signal-anchor for type II membrane protein membrane-spanning segment; sequence LIRFNLVLLGFSFLLYTAIFF. Residues aspartate 395 and aspartate 397 each coordinate Mn(2+). Residues 395–397, 424–426, 451–455, and 504–509 each bind substrate; these read DAD, NSG, NGGDQ, and HYLGWK. Histidine 504 serves as a coordination point for Mn(2+).

This sequence belongs to the glycosyltransferase 8 family. Glycogenin subfamily. Mn(2+) serves as cofactor.

It is found in the golgi apparatus membrane. Its function is as follows. Glycosyltransferase required for the addition of both glucuronic acid and 4-O-methylglucuronic acid branches to xylan in stem cell walls. In association with GUX1, is responsible for almost all of the substitutions of the xylan backbone in stem glucuronoxylan. This Arabidopsis thaliana (Mouse-ear cress) protein is UDP-glucuronate:xylan alpha-glucuronosyltransferase 2 (GUX2).